We begin with the raw amino-acid sequence, 405 residues long: Acetate kinase (405 aa).

N7 serves as a coordination point for Mg(2+). K14 is a binding site for ATP. R99 is a binding site for substrate. Residue D156 is the Proton donor/acceptor of the active site. 215–219 (HLGNG) is an ATP binding site. E391 serves as a coordination point for Mg(2+).

It belongs to the acetokinase family. In terms of assembly, homodimer. Mg(2+) is required as a cofactor. Requires Mn(2+) as cofactor.

It is found in the cytoplasm. The enzyme catalyses acetate + ATP = acetyl phosphate + ADP. It functions in the pathway metabolic intermediate biosynthesis; acetyl-CoA biosynthesis; acetyl-CoA from acetate: step 1/2. In terms of biological role, catalyzes the formation of acetyl phosphate from acetate and ATP. Can also catalyze the reverse reaction. In Nostoc sp. (strain PCC 7120 / SAG 25.82 / UTEX 2576), this protein is Acetate kinase.